The following is a 132-amino-acid chain: Small ribosomal subunit protein uS8 (132 aa).

Belongs to the universal ribosomal protein uS8 family. Part of the 30S ribosomal subunit. Contacts proteins S5 and S12.

Functionally, one of the primary rRNA binding proteins, it binds directly to 16S rRNA central domain where it helps coordinate assembly of the platform of the 30S subunit. The sequence is that of Small ribosomal subunit protein uS8 from Clostridium perfringens (strain ATCC 13124 / DSM 756 / JCM 1290 / NCIMB 6125 / NCTC 8237 / Type A).